Reading from the N-terminus, the 188-residue chain is Deoxycytidylate deaminase (188 aa).

Residues 1-171 (MKASTVLQIA…DILRNAGIEV (171 aa)) enclose the CMP/dCMP-type deaminase domain. Positions 19, 49, 94, 102, and 104 each coordinate Zn(2+). E106 (proton donor) is an active-site residue. Zn(2+)-binding residues include C132 and C135.

This sequence belongs to the cytidine and deoxycytidylate deaminase family. As to quaternary structure, homohexamer. Zn(2+) serves as cofactor.

It carries out the reaction dCMP + H2O + H(+) = dUMP + NH4(+). Its activity is regulated as follows. Allosteric enzyme whose activity is greatly influenced by the end products of its metabolic pathway, dCTP and dTTP. Functionally, supplies the nucleotide substrate for thymidylate synthetase. The polypeptide is Deoxycytidylate deaminase (CD) (Enterobacteria phage T2 (Bacteriophage T2)).